A 405-amino-acid chain; its full sequence is Cytoplasmic tRNA 2-thiolation protein 2 (405 aa).

The protein belongs to the CTU2/NCS2 family.

It localises to the cytoplasm. Its pathway is tRNA modification; 5-methoxycarbonylmethyl-2-thiouridine-tRNA biosynthesis. Functionally, plays a central role in 2-thiolation of mcm(5)S(2)U at tRNA wobble positions of tRNA(Lys), tRNA(Glu) and tRNA(Gln). May act by forming a heterodimer with NCS6/CTU1 that ligates sulfur from thiocarboxylated URM1 onto the uridine of tRNAs at wobble position. The polypeptide is Cytoplasmic tRNA 2-thiolation protein 2 (Drosophila pseudoobscura pseudoobscura (Fruit fly)).